A 549-amino-acid chain; its full sequence is Chaperonin GroEL (549 aa).

Residues 29–32, lysine 50, 86–90, glycine 414, 477–479, and aspartate 493 contribute to the ATP site; these read TLGP, DGTTT, and NAL.

Belongs to the chaperonin (HSP60) family. As to quaternary structure, forms a cylinder of 14 subunits composed of two heptameric rings stacked back-to-back. Interacts with the co-chaperonin GroES.

The protein resides in the cytoplasm. The catalysed reaction is ATP + H2O + a folded polypeptide = ADP + phosphate + an unfolded polypeptide.. Its function is as follows. Together with its co-chaperonin GroES, plays an essential role in assisting protein folding. The GroEL-GroES system forms a nano-cage that allows encapsulation of the non-native substrate proteins and provides a physical environment optimized to promote and accelerate protein folding. This Leptospira biflexa serovar Patoc (strain Patoc 1 / Ames) protein is Chaperonin GroEL.